Consider the following 996-residue polypeptide: Receptor-like protein kinase HSL1 (996 aa).

The first 15 residues, 1–15, serve as a signal peptide directing secretion; it reads MYLLFLFLLFPTVFS. Residues 16–618 lie on the Extracellular side of the membrane; that stretch reads LNQDGFILQQ…ENEAKKRGYV (603 aa). LRR repeat units lie at residues 59–83, 84–107, 109–131, 133–154, 155–178, 179–203, 205–228, 229–252, 253–276, 278–299, 300–323, 325–347, 348–371, 373–395, 396–419, 421–443, 444–467, 468–491, 493–515, 516–539, 541–562, and 563–586; these read FSSV…ICRL, SNLA…IAAC, SLQT…LADI, TLVH…SFGK, FENL…FLGN, ISTL…EFGN, TNLE…LGQL, SKLV…LGGL, TNVV…LGNL, SLRL…ELCR, VPLE…IALS, NLYE…LGLN, SPLR…LCAK, ELEE…LADC, RSLT…FWGL, HVNL…IGGA, SNLS…IGSL, DNLN…LMSL, ELGT…IKSW, KKLN…IGSL, VLNY…SLQS, and LKLN…LAKD. Asparagine 93 and asparagine 97 each carry an N-linked (GlcNAc...) asparagine glycan. N-linked (GlcNAc...) asparagine glycans are attached at residues asparagine 143, asparagine 178, asparagine 186, and asparagine 203. Asparagine 262 is a glycosylation site (N-linked (GlcNAc...) asparagine). N-linked (GlcNAc...) asparagine glycans are attached at residues asparagine 429 and asparagine 445. N-linked (GlcNAc...) asparagine glycosylation is present at asparagine 569. A helical membrane pass occupies residues 619–639; that stretch reads WLLRSIFVLAAMVLLAGVAWF. Over 640-996 the chain is Cytoplasmic; that stretch reads YFKYRTFKKA…EDTSDQGSIA (357 aa). Residues 676–962 enclose the Protein kinase domain; sequence LDEDNVIGAG…RRVVKMLQEI (287 aa). ATP-binding positions include 682–690 and lysine 704; that span reads IGAGASGKV. Phosphotyrosine occurs at positions 764 and 802. The active-site Proton acceptor is the aspartate 815. Serine 851 is subject to Phosphoserine. Tyrosine 859 and tyrosine 866 each carry phosphotyrosine. Residue threonine 867 is modified to Phosphothreonine. Positions 967–996 are disordered; the sequence is EDSLHKIRDDKDGKLTPYYNEDTSDQGSIA. Positions 968–980 are enriched in basic and acidic residues; it reads DSLHKIRDDKDGK.

The protein belongs to the protein kinase superfamily. Ser/Thr protein kinase family.

The protein localises to the cell membrane. The catalysed reaction is L-seryl-[protein] + ATP = O-phospho-L-seryl-[protein] + ADP + H(+). The enzyme catalyses L-threonyl-[protein] + ATP = O-phospho-L-threonyl-[protein] + ADP + H(+). This Arabidopsis thaliana (Mouse-ear cress) protein is Receptor-like protein kinase HSL1 (HSL1).